Here is a 196-residue protein sequence, read N- to C-terminus: Nucleoid occlusion factor SlmA (196 aa).

In terms of domain architecture, HTH tetR-type spans 7–68 (SNRREEILQA…GLIEFIEEAL (62 aa)). The segment at residues 31–50 (TTAKLAQQVGVSEAALYRHF) is a DNA-binding region (H-T-H motif). Residues 65–142 (EEALMSRINR…QLRQILRERK (78 aa)) are a coiled coil.

The protein belongs to the nucleoid occlusion factor SlmA family. Homodimer. Interacts with FtsZ.

Its subcellular location is the cytoplasm. It localises to the nucleoid. In terms of biological role, required for nucleoid occlusion (NO) phenomenon, which prevents Z-ring formation and cell division over the nucleoid. Acts as a DNA-associated cell division inhibitor that binds simultaneously chromosomal DNA and FtsZ, and disrupts the assembly of FtsZ polymers. SlmA-DNA-binding sequences (SBS) are dispersed on non-Ter regions of the chromosome, preventing FtsZ polymerization at these regions. This is Nucleoid occlusion factor SlmA from Vibrio vulnificus (strain CMCP6).